A 394-amino-acid chain; its full sequence is NAD(P)H-quinone oxidoreductase subunit H (394 aa).

The protein belongs to the complex I 49 kDa subunit family. In terms of assembly, NDH-1 can be composed of about 15 different subunits; different subcomplexes with different compositions have been identified which probably have different functions.

It is found in the cellular thylakoid membrane. The enzyme catalyses a plastoquinone + NADH + (n+1) H(+)(in) = a plastoquinol + NAD(+) + n H(+)(out). It carries out the reaction a plastoquinone + NADPH + (n+1) H(+)(in) = a plastoquinol + NADP(+) + n H(+)(out). In terms of biological role, NDH-1 shuttles electrons from an unknown electron donor, via FMN and iron-sulfur (Fe-S) centers, to quinones in the respiratory and/or the photosynthetic chain. The immediate electron acceptor for the enzyme in this species is believed to be plastoquinone. Couples the redox reaction to proton translocation, and thus conserves the redox energy in a proton gradient. Cyanobacterial NDH-1 also plays a role in inorganic carbon-concentration. This Prochlorococcus marinus (strain SARG / CCMP1375 / SS120) protein is NAD(P)H-quinone oxidoreductase subunit H.